Consider the following 30-residue polypeptide: Glucagon-like peptide (30 aa).

Arg-30 carries the post-translational modification Arginine amide.

This sequence belongs to the glucagon family.

It localises to the secreted. The chain is Glucagon-like peptide from Anguilla anguilla (European freshwater eel).